Here is a 264-residue protein sequence, read N- to C-terminus: MAVGKNKRLTKGGKKGAKKKVVDPFSKKDWYDVKAPAMFNIRNIGKTLVTRTQGTKIASDGLKGRVFEVSLADLQNDEVAFRKFKLITEDVQGKNCLTNFHGMDLTRDKMCSMVKKWQTMIEAHVDVKTTDGYLLRLFCVGFTKKRNNQIRKTSYAQHQQVRQIRKKMMEIMTREVQTNDLKEVVNKLIPDSIGKDIEKACQSIYPLHDVFVRKVKMLKKPKFELGKLMELHGEGGSSGKTTGDETGAKVERADGYEPPVQESV.

Lys-34 bears the N6-acetyllysine; alternate mark. A Glycyl lysine isopeptide (Lys-Gly) (interchain with G-Cter in SUMO2); alternate cross-link involves residue Lys-34. At Lys-56 the chain carries N6-acetyllysine. ADP-ribosyltyrosine is present on Tyr-155. Positions 232-264 (HGEGGSSGKTTGDETGAKVERADGYEPPVQESV) are disordered. A Phosphoserine modification is found at Ser-237. Positions 242-255 (TGDETGAKVERADG) are enriched in basic and acidic residues. An N6-acetyllysine; alternate modification is found at Lys-249. Lys-249 is covalently cross-linked (Glycyl lysine isopeptide (Lys-Gly) (interchain with G-Cter in SUMO2); alternate). Tyr-256 carries the post-translational modification Phosphotyrosine. At Ser-263 the chain carries Phosphoserine.

It belongs to the eukaryotic ribosomal protein eS1 family. In terms of assembly, component of the small ribosomal subunit. Mature ribosomes consist of a small (40S) and a large (60S) subunit. The 40S subunit contains about 33 different proteins and 1 molecule of RNA (18S). The 60S subunit contains about 49 different proteins and 3 molecules of RNA (28S, 5.8S and 5S). Identified in a IGF2BP1-dependent mRNP granule complex containing untranslated mRNAs. Binds with high affinity to IPO4. Interacts with DDIT3. Part of the small subunit (SSU) processome, composed of more than 70 proteins and the RNA chaperone small nucleolar RNA (snoRNA) U3. Post-translationally, the protein designated S3b has the same amino acid sequence as S3a except that it lacks the C-terminal 12 residues. It is probable that S3a is converted by proteolysis, either physiologically or fortuitously, to S3b. In terms of processing, ADP-ribosylated at Tyr-155 by PARP1 in presence of HPF1.

The protein localises to the cytoplasm. It is found in the nucleus. The protein resides in the nucleolus. Its function is as follows. Component of the small ribosomal subunit. The ribosome is a large ribonucleoprotein complex responsible for the synthesis of proteins in the cell. Part of the small subunit (SSU) processome, first precursor of the small eukaryotic ribosomal subunit. During the assembly of the SSU processome in the nucleolus, many ribosome biogenesis factors, an RNA chaperone and ribosomal proteins associate with the nascent pre-rRNA and work in concert to generate RNA folding, modifications, rearrangements and cleavage as well as targeted degradation of pre-ribosomal RNA by the RNA exosome. May play a role during erythropoiesis through regulation of transcription factor DDIT3. The polypeptide is Small ribosomal subunit protein eS1 (Rps3a) (Rattus norvegicus (Rat)).